A 77-amino-acid polypeptide reads, in one-letter code: Small ribosomal subunit protein uS17 (77 aa).

The protein belongs to the universal ribosomal protein uS17 family. Part of the 30S ribosomal subunit.

Functionally, one of the primary rRNA binding proteins, it binds specifically to the 5'-end of 16S ribosomal RNA. The polypeptide is Small ribosomal subunit protein uS17 (Anaplasma marginale (strain St. Maries)).